Reading from the N-terminus, the 119-residue chain is Large ribosomal subunit protein bL17 (119 aa).

It belongs to the bacterial ribosomal protein bL17 family. As to quaternary structure, part of the 50S ribosomal subunit. Contacts protein L32.

This is Large ribosomal subunit protein bL17 from Ureaplasma parvum serovar 3 (strain ATCC 27815 / 27 / NCTC 11736).